A 384-amino-acid chain; its full sequence is Odorant receptor 33c (384 aa).

Over 1 to 35 (MVIIDSLSFYRPFWICMRLLVPTFFKDSSRPVQLY) the chain is Cytoplasmic. Residues 36 to 56 (VVLLHILVTLWFPLHLLLHLL) form a helical membrane-spanning segment. Residues 57 to 63 (LLPSTAE) are Extracellular-facing. The chain crosses the membrane as a helical span at residues 64-84 (FFKNLTMSLTCVACSLKHVAH). Residues 85 to 128 (LYHLPQIVEIESLIEQLDTFIASEQEHRYYRDHVHCHARRFTRC) lie on the Cytoplasmic side of the membrane. A helical transmembrane segment spans residues 129 to 149 (LYISFGMIYALFLFGVFVQVI). The Extracellular segment spans residues 150 to 169 (SGNWELLYPAYFPFDLESNR). Residues 170–190 (FLGAVALGYQVFSMLVEGFQG) traverse the membrane as a helical segment. Residues 191–251 (LGNDTYTPLT…LVRFHNLVSR (61 aa)) are Cytoplasmic-facing. A helical membrane pass occupies residues 252–272 (TISEVQLVQLGGCGATLCIIV). The Extracellular portion of the chain corresponds to 273–274 (SY). Residues 275 to 295 (MLFFVGDTISLVYYLVFFGVV) traverse the membrane as a helical segment. Residues 296-358 (CVQLFPSCYF…WIIKAGGLIE (63 aa)) lie on the Cytoplasmic side of the membrane. The chain crosses the membrane as a helical span at residues 359–379 (LNLNAFFATLKMAYSLFAVVV). At 380–384 (RAKGI) the chain is on the extracellular side.

This sequence belongs to the insect chemoreceptor superfamily. Heteromeric odorant receptor channel (TC 1.A.69) family. Or2a subfamily. In terms of assembly, interacts with Orco. Complexes exist early in the endomembrane system in olfactory sensory neurons (OSNs), coupling these complexes to the conserved ciliary trafficking pathway. In terms of tissue distribution, expressed in the antenna and in a subset of 18 olfactory receptor neurons in the maxillary palp.

It is found in the cell membrane. Functionally, odorant receptor which mediates acceptance or avoidance behavior, depending on its substrates. The odorant receptor repertoire encodes a large collection of odor stimuli that vary widely in identity, intensity, and duration. May form a complex with Orco to form odorant-sensing units, providing sensitive and prolonged odorant signaling and calcium permeability. This Drosophila melanogaster (Fruit fly) protein is Odorant receptor 33c (Or33c).